The following is a 97-amino-acid chain: Protein S100-A10 (97 aa).

An N6-acetyllysine mark is found at Lys23 and Lys28. Lys37 carries the post-translational modification N6-acetyllysine; alternate. A Glycyl lysine isopeptide (Lys-Gly) (interchain with G-Cter in SUMO2); alternate cross-link involves residue Lys37. Lys54 and Lys57 each carry N6-acetyllysine. Residues 60-71 form an ancestral calcium site region; the sequence is DQCRDGKVGFQS.

The protein belongs to the S-100 family. Heterotetramer containing 2 light chains of S100A10/p11 and 2 heavy chains of ANXA2/p36. Interacts with SCN10A. Interacts with TASOR.

Because S100A10 induces the dimerization of ANXA2/p36, it may function as a regulator of protein phosphorylation in that the ANXA2 monomer is the preferred target (in vitro) of tyrosine-specific kinase. The chain is Protein S100-A10 (S100A10) from Bos taurus (Bovine).